The following is a 443-amino-acid chain: Mevalonate kinase (443 aa).

ATP-binding positions include Lys-12, Ser-138, and 143 to 149; that span reads GAGLGSS. Mg(2+)-binding residues include Ser-149 and Glu-191. The active-site Proton acceptor is Asp-202.

Belongs to the GHMP kinase family. Mevalonate kinase subfamily. As to quaternary structure, homodimer. Requires Mg(2+) as cofactor.

The protein localises to the cytoplasm. It localises to the cytosol. The catalysed reaction is (R)-mevalonate + ATP = (R)-5-phosphomevalonate + ADP + H(+). Its pathway is isoprenoid biosynthesis; isopentenyl diphosphate biosynthesis via mevalonate pathway; isopentenyl diphosphate from (R)-mevalonate: step 1/3. With respect to regulation, farnesyl pyrophosphate and geranyl pyrophosphate inhibit mevalonate kinase by binding competitively at the ATP-binding site. Its function is as follows. Mevalonate kinase; part of the second module of ergosterol biosynthesis pathway that includes the middle steps of the pathway. ERG12 converts mevalonate into 5-phosphomevalonate. The second module is carried out in the vacuole and involves the formation of farnesyl diphosphate, which is also an important intermediate in the biosynthesis of ubiquinone, dolichol, heme and prenylated proteins. Activity by the mevalonate kinase ERG12 first converts mevalonate into 5-phosphomevalonate. 5-phosphomevalonate is then further converted to 5-diphosphomevalonate by the phosphomevalonate kinase ERG8. The diphosphomevalonate decarboxylase MVD1/ERG19 then produces isopentenyl diphosphate. The isopentenyl-diphosphate delta-isomerase IDI1 then catalyzes the 1,3-allylic rearrangement of the homoallylic substrate isopentenyl (IPP) to its highly electrophilic allylic isomer, dimethylallyl diphosphate (DMAPP). Finally the farnesyl diphosphate synthase ERG20 catalyzes the sequential condensation of isopentenyl pyrophosphate with dimethylallyl pyrophosphate, and then with the resultant geranylpyrophosphate to the ultimate product farnesyl pyrophosphate. The chain is Mevalonate kinase from Saccharomyces cerevisiae (strain ATCC 204508 / S288c) (Baker's yeast).